A 619-amino-acid chain; its full sequence is Nuclear hormone receptor family member nhr-6 (619 aa).

The segment covering 1 to 18 (MEQLSIQTDELQDQFSNC) has biased composition (polar residues). 4 disordered regions span residues 1-29 (MEQLSIQTDELQDQFSNCSPASVDSSYSS), 58-86 (MSKNSSCSSSFDYGEFGPSSSSRKGSKTT), 103-134 (QVNTVPKPTKTEVESIPEEFEQKPSSSSHRLP), and 196-232 (QHFPVSDSRRGSQGTTSSSNNTGGTPSPHSSSLPTSP). Residues 19-29 (SPASVDSSYSS) show a composition bias toward low complexity. Residues 125-134 (KPSSSSHRLP) show a composition bias toward polar residues. Residues 206–232 (GSQGTTSSSNNTGGTPSPHSSSLPTSP) are compositionally biased toward low complexity. The nuclear receptor DNA-binding region spans 265–340 (DKMCAVCNDR…VGMVKEIVRH (76 aa)). 2 NR C4-type zinc fingers span residues 268 to 288 (CAVCNDRAVCLHYGARTCEGC) and 304 to 328 (CAGNKTCPIDKRYRSRCQYCRYQKC). A disordered region spans residues 345-365 (GRRGRLSSKTKLARSEDQPSP). Over residues 346–356 (RRGRLSSKTKL) the composition is skewed to basic residues. The region spanning 365-600 (PPLPLLALMG…STDAPPACGS (236 aa)) is the NR LBD domain. The segment at 589–600 (LRSTDAPPACGS) is AF-2.

This sequence belongs to the nuclear hormone receptor family. NR4 subfamily. In hermaphrodites, expressed in the developing spermatheca and dorsal uterus. Expression includes the 8 cells of the dorsal somatic gonad primordium and the sujc cells that form the core of the spermatheca-uterine valve. Expressed in the precursor cells of the spermatheca-sheath lineages (SS cells) and in the precursors and descendents of the dorsal-uterine lineage (DU cells). In both hermaphroditic and male animals, expressed in a pair of head chemosensory neurons.

The protein resides in the nucleus. Functionally, transcriptional activator that induces gene expression by binding to the NGFI-B response element (NBRE) 5'-AAAGGTCA-3'. Required for proper morphogenesis of the spermatheca and the spermatheca-uterine valve formation. Promotes cell proliferation and differentiation of the spermatheca precursor cells during spermatheca development in larval stage L4. Might play a role in promoting G1/S phase progression in the spermatheca precursor cell lineage. Also required for the differentiation of the spermatheca-uterine junction core (sujc) cells which are generating the spermatheca-uterine valve. In Caenorhabditis elegans, this protein is Nuclear hormone receptor family member nhr-6 (nhr-6).